The chain runs to 556 residues: Urocanate hydratase (556 aa).

NAD(+)-binding positions include 52–53 (GG), Gln130, 176–178 (GMG), Glu196, Arg201, 242–243 (NA), 263–267 (QTSAH), 273–274 (YL), and Tyr322. The active site involves Cys410. An NAD(+)-binding site is contributed by Gly492.

Belongs to the urocanase family. NAD(+) serves as cofactor.

The protein resides in the cytoplasm. It catalyses the reaction 4-imidazolone-5-propanoate = trans-urocanate + H2O. Its pathway is amino-acid degradation; L-histidine degradation into L-glutamate; N-formimidoyl-L-glutamate from L-histidine: step 2/3. Its function is as follows. Catalyzes the conversion of urocanate to 4-imidazolone-5-propionate. This Shewanella sediminis (strain HAW-EB3) protein is Urocanate hydratase.